A 960-amino-acid chain; its full sequence is Semaphorin-6C (960 aa).

An N-terminal signal peptide occupies residues Met-1–Thr-23. The Extracellular segment spans residues Ala-24–Pro-635. Residues Pro-29 to Leu-515 enclose the Sema domain. A glycan (N-linked (GlcNAc...) asparagine) is linked at Asn-69. Cystine bridges form between Cys-110–Cys-120, Cys-138–Cys-147, Cys-261–Cys-372, and Cys-286–Cys-331. Asn-285 carries N-linked (GlcNAc...) asparagine glycosylation. Asn-436 is a glycosylation site (N-linked (GlcNAc...) asparagine). Intrachain disulfides connect Cys-478-Cys-509, Cys-518-Cys-536, Cys-524-Cys-569, and Cys-528-Cys-544. The segment at Val-555–Ser-624 is disordered. The helical transmembrane segment at Leu-636 to Val-656 threads the bilayer. Residues Ser-657–Phe-960 lie on the Cytoplasmic side of the membrane. Disordered stretches follow at residues Leu-685–Glu-725, Ala-745–Glu-792, and His-806–Phe-960. The segment covering Arg-899 to Ser-909 has biased composition (low complexity). Residues Pro-922–Val-935 show a composition bias toward basic and acidic residues. Residues Ser-940–Ala-952 are compositionally biased toward pro residues.

It belongs to the semaphorin family. Expressed in many regions of the developing nervous system, probably in neurons and their precursors, but also in nonneural tissue such as immature muscle and dermis. In adult, strong expression in the skeletal muscle and moderate expression in the brain, where cerebellum shows the highest expression. Also expressed in almost all areas of the CNS.

It localises to the cell membrane. Shows growth cone collapsing activity on dorsal root ganglion (DRG) neurons in vitro. May be a stop signal for the DRG neurons in their target areas, and possibly also for other neurons. May also be involved in the maintenance and remodeling of neuronal connections. This Rattus norvegicus (Rat) protein is Semaphorin-6C (Sema6c).